The sequence spans 1011 residues: Unconventional myosin ID (1011 aa).

The region spanning 7–690 (AGVQDFVLLD…TLFALEHQRN (684 aa)) is the Myosin motor domain. 100-107 (GESGAGKT) contacts ATP. The tract at residues 567–589 (MADLVVTLLKKEPFYVRCIKPND) is actin-binding. IQ domains follow at residues 694–714 (PHIV…RNFK) and 716–736 (MKAA…SYVQ). A TH1 domain is found at 806–1007 (AGRRPYWGQA…EGNIIFEVPA (202 aa)).

The protein belongs to the TRAFAC class myosin-kinesin ATPase superfamily. Myosin family. Binds to F-actin. Interacts with arm. Interacts with shg. Interacts with ds (via intracellular region). As to expression, in the embryo, expressed in gastric caeca, midgut cells of the proventriculus, and in the mid and hindgut. In the larval gut brush border, expression is in the terminal web domain. In the adult gut brush border, expression remains in the web domain and has also moved into the microvilli. Also expressed at low levels in follicle cells during oogenesis.

The protein localises to the cytoplasm. The protein resides in the cell cortex. It is found in the cytoskeleton. It localises to the cell membrane. Its subcellular location is the cell junction. The protein localises to the adherens junction. The protein resides in the cell projection. Unconventional myosin that functions as actin-based motor protein with ATPase activity. Binds to membranes enriched in phosphatidylinositol 4-5-bisphosphate, and can glide along actin filaments when anchored to a lipid bilayer. Generates left-right asymmetry at the level of single cells, organs and the whole body via its interaction with the actin cytoskeleton, both in the embryo and the adult. Normal left-right asymmetry of the larval midgut and hindgut requires expression in the embryonic hindgut epithelium during a critical time period, 10 to 12.75 hours after egg laying. This period corresponds to a late stage of germband retraction, and precedes left-right asymmetric morphogenesis. Expression in segment H1 of the imaginal ring is required at 0 to 24 hours after pupation for changes of cell shape and orientation in the H2 segment, which then gives rise to normal, dextral looping of the adult hindgut. Required during a critical period, 126-132 hours after egg laying, for normal, dextral rotation of the adult male genitalia. Has a double role by promoting dextral rotation in the posterior compartment of segment A8 of the male genital disk, and in repressing sinistral looping in the anterior compartment. The protein is Unconventional myosin ID of Drosophila melanogaster (Fruit fly).